The primary structure comprises 98 residues: Large ribosomal subunit protein uL23 (98 aa).

It belongs to the universal ribosomal protein uL23 family. In terms of assembly, part of the 50S ribosomal subunit. Contacts protein L29, and trigger factor when it is bound to the ribosome.

Its function is as follows. One of the early assembly proteins it binds 23S rRNA. One of the proteins that surrounds the polypeptide exit tunnel on the outside of the ribosome. Forms the main docking site for trigger factor binding to the ribosome. This Limosilactobacillus reuteri (strain DSM 20016) (Lactobacillus reuteri) protein is Large ribosomal subunit protein uL23.